Consider the following 282-residue polypeptide: Pantothenate synthetase (282 aa).

30–37 (MGYFHEGH) contributes to the ATP binding site. His37 functions as the Proton donor in the catalytic mechanism. Gln61 lines the (R)-pantoate pocket. Gln61 is a beta-alanine binding site. An ATP-binding site is contributed by 147–150 (GQKD). Gln153 lines the (R)-pantoate pocket. Residues Val176 and 184–187 (LSSR) contribute to the ATP site.

This sequence belongs to the pantothenate synthetase family. Homodimer.

The protein localises to the cytoplasm. It catalyses the reaction (R)-pantoate + beta-alanine + ATP = (R)-pantothenate + AMP + diphosphate + H(+). It functions in the pathway cofactor biosynthesis; (R)-pantothenate biosynthesis; (R)-pantothenate from (R)-pantoate and beta-alanine: step 1/1. In terms of biological role, catalyzes the condensation of pantoate with beta-alanine in an ATP-dependent reaction via a pantoyl-adenylate intermediate. This chain is Pantothenate synthetase, found in Maridesulfovibrio salexigens (strain ATCC 14822 / DSM 2638 / NCIMB 8403 / VKM B-1763) (Desulfovibrio salexigens).